Here is a 513-residue protein sequence, read N- to C-terminus: Plexin domain-containing protein 2 (513 aa).

The N-terminal stretch at 1 to 24 (MGARSESLVGVVLLFQLLADRLWC) is a signal peptide. At 25 to 438 (AATASDSLYD…AEMKTGTLHT (414 aa)) the chain is on the extracellular side. N-linked (GlcNAc...) asparagine glycosylation is found at asparagine 88, asparagine 145, asparagine 198, asparagine 206, asparagine 222, and asparagine 330. The 46-residue stretch at 312–357 (TCLQFNSCSSCVSSMIGFNCSWCNIPQRCSSGFDRHRQDWVENGCT) folds into the PSI domain. The chain crosses the membrane as a helical span at residues 439 to 459 (GLIIGILILVLLIITAILVAV). Topologically, residues 460–513 (YMYHHPTSSASLFLIERRPSRWPAMKFRRGSGHPAYAEVEPIGEKEGFIVSEQC) are cytoplasmic.

It belongs to the plexin family.

The protein localises to the membrane. This is Plexin domain-containing protein 2 (plxdc2) from Xenopus laevis (African clawed frog).